A 616-amino-acid chain; its full sequence is KIF-binding protein (616 aa).

Residues 52–78 (EEEEESEAEGKEERRDGPESGGRRGES) are disordered. Basic and acidic residues predominate over residues 59-78 (AEGKEERRDGPESGGRRGES).

It belongs to the KIF-binding protein family.

It is found in the cytoplasm. The protein resides in the cytoskeleton. Its function is as follows. Activator of KIF1B plus-end-directed microtubule motor activity. Required for organization of axonal microtubules, and axonal outgrowth and maintenance during peripheral and central nervous system development. This chain is KIF-binding protein, found in Xenopus tropicalis (Western clawed frog).